The following is a 238-amino-acid chain: 6-phosphogluconolactonase (238 aa).

Belongs to the glucosamine/galactosamine-6-phosphate isomerase family. 6-phosphogluconolactonase subfamily.

It carries out the reaction 6-phospho-D-glucono-1,5-lactone + H2O = 6-phospho-D-gluconate + H(+). Its pathway is carbohydrate degradation; pentose phosphate pathway; D-ribulose 5-phosphate from D-glucose 6-phosphate (oxidative stage): step 2/3. Hydrolysis of 6-phosphogluconolactone to 6-phosphogluconate. The chain is 6-phosphogluconolactonase (pgl) from Pseudomonas aeruginosa (strain ATCC 15692 / DSM 22644 / CIP 104116 / JCM 14847 / LMG 12228 / 1C / PRS 101 / PAO1).